We begin with the raw amino-acid sequence, 323 residues long: E3 ubiquitin-protein ligase SIRP1 (323 aa).

An RING-type; atypical zinc finger spans residues 199–240 (CSVCLDDLEVGSQAKQMPCEHKFHSSCILPWLELHSSCPVCR). 2 disordered regions span residues 248-280 (TKDL…ESSN) and 296-323 (REAQ…AGHS). Basic and acidic residues predominate over residues 259–269 (RVEDSHEEVRA).

Its subcellular location is the cytoplasm. The catalysed reaction is S-ubiquitinyl-[E2 ubiquitin-conjugating enzyme]-L-cysteine + [acceptor protein]-L-lysine = [E2 ubiquitin-conjugating enzyme]-L-cysteine + N(6)-ubiquitinyl-[acceptor protein]-L-lysine.. It functions in the pathway protein modification; protein ubiquitination. Its function is as follows. Possesses E3 ubiqutin-protein ligase activity in vitro. Acts as negative regulator of salinity stress tolerance mediated by the ubiquitin-proteasome degradation pathway. This is E3 ubiquitin-protein ligase SIRP1 from Oryza sativa subsp. japonica (Rice).